Consider the following 234-residue polypeptide: 2-C-methyl-D-erythritol 4-phosphate cytidylyltransferase (234 aa).

Belongs to the IspD/TarI cytidylyltransferase family. IspD subfamily.

It carries out the reaction 2-C-methyl-D-erythritol 4-phosphate + CTP + H(+) = 4-CDP-2-C-methyl-D-erythritol + diphosphate. Its pathway is isoprenoid biosynthesis; isopentenyl diphosphate biosynthesis via DXP pathway; isopentenyl diphosphate from 1-deoxy-D-xylulose 5-phosphate: step 2/6. Catalyzes the formation of 4-diphosphocytidyl-2-C-methyl-D-erythritol from CTP and 2-C-methyl-D-erythritol 4-phosphate (MEP). This chain is 2-C-methyl-D-erythritol 4-phosphate cytidylyltransferase, found in Shewanella sediminis (strain HAW-EB3).